Reading from the N-terminus, the 161-residue chain is Regulator of ribonuclease activity A (161 aa).

This sequence belongs to the RraA family. In terms of assembly, homotrimer. Binds to both RNA-binding sites in the C-terminal region of Rne and to RhlB.

The protein resides in the cytoplasm. Globally modulates RNA abundance by binding to RNase E (Rne) and regulating its endonucleolytic activity. Can modulate Rne action in a substrate-dependent manner by altering the composition of the degradosome. Modulates RNA-binding and helicase activities of the degradosome. In Tolumonas auensis (strain DSM 9187 / NBRC 110442 / TA 4), this protein is Regulator of ribonuclease activity A.